The sequence spans 403 residues: D-mannonate dehydratase CC0532 (403 aa).

Substrate contacts are provided by Asn38 and His123. Tyr160 (proton donor/acceptor) is an active-site residue. Residue Asp211 participates in Mg(2+) binding. The active-site Proton donor/acceptor is the His213. Residues Glu237 and Glu263 each contribute to the Mg(2+) site. The substrate site is built by Glu263, Arg284, His313, Asp317, and Glu340.

Belongs to the mandelate racemase/muconate lactonizing enzyme family. GalD subfamily. The cofactor is Mg(2+).

It carries out the reaction D-mannonate = 2-dehydro-3-deoxy-D-gluconate + H2O. It functions in the pathway carbohydrate metabolism; pentose and glucuronate interconversion. In terms of biological role, catalyzes the dehydration of D-mannonate. Has no detectable activity with a panel of 70 other acid sugars (in vitro). This is D-mannonate dehydratase CC0532 from Caulobacter vibrioides (strain ATCC 19089 / CIP 103742 / CB 15) (Caulobacter crescentus).